Reading from the N-terminus, the 24-residue chain is Brevinin-1SPc (24 aa).

Cysteine 18 and cysteine 24 are oxidised to a cystine.

In terms of tissue distribution, expressed by the skin glands.

The protein resides in the secreted. Functionally, antimicrobial peptide with activity against Gram-negative and Gram-positive bacteria and fungi. Also shows hemolytic activity. In Lithobates septentrionalis (Mink frog), this protein is Brevinin-1SPc.